A 794-amino-acid chain; its full sequence is Elongator complex protein 2 (794 aa).

WD repeat units follow at residues 55–93 (EHTK…TTKS), 98–140 (GHTS…YVCF), 147–188 (DGFC…AGEG), 203–244 (GHED…KEQM), 286–328 (GHEG…IWLE), 337–376 (GNSV…PQLW), 384–423 (GHYG…GANP), 433–472 (IHGY…ENFR), 557–601 (GHGY…QIQK), 604–643 (GHQL…VSYQ), 654–693 (VHTR…KESS), 705–751 (LKNE…WKLL), and 759–794 (AHHL…IKLT).

It belongs to the WD repeat ELP2 family. As to quaternary structure, component of the elongator complex composed of Elp1, Elp2, Elp3, Elp4, Elp5 and Elp6. The elongator complex associates with and stabilizes microtubules; efficient interaction requires the full complex.

The protein resides in the cytoplasm. Its subcellular location is the nucleus. It is found in the cytoskeleton. The protein localises to the spindle. It functions in the pathway tRNA modification; 5-methoxycarbonylmethyl-2-thiouridine-tRNA biosynthesis. In terms of biological role, component of the elongator complex, which is required for multiple tRNA modifications, including mcm5U (5-methoxycarbonylmethyl uridine), mcm5s2U (5-methoxycarbonylmethyl-2-thiouridine), and ncm5U (5-carbamoylmethyl uridine). The elongator complex catalyzes the formation of carboxymethyluridine in the wobble base at position 34 in tRNAs. Binding by the elongator complex stabilizes microtubules and promotes their growth. This induces central spindle asymmetry, promoting polarized signaling endosome trafficking during asymmetric cell division and cell fate assignation of sensory organ precursor cells. Involved in the regulation of the STAT pathway. The chain is Elongator complex protein 2 from Drosophila melanogaster (Fruit fly).